Reading from the N-terminus, the 579-residue chain is Probable methyl-accepting chemotaxis protein BT9727_0355 (579 aa).

Over 1-13 (MKKYWHKLSFLQK) the chain is Cytoplasmic. A helical transmembrane segment spans residues 14 to 34 (NVLLTVLVILTLVGTMGALSF). Topologically, residues 35 to 198 (NMFQNSMMSI…ASIVPSTKEK (164 aa)) are extracellular. Residues 199–219 (FIIQGLMFICISVLIATVIQF) form a helical membrane-spanning segment. Topologically, residues 220 to 579 (LIVRNALAPL…LQELIGEFKS (360 aa)) are cytoplasmic. The region spanning 223-274 (RNALAPLRDLREGLRRVGEGDLNIKLEERSDDIGIINSYFNNTIEKFKGIID) is the HAMP domain. The residue at position 289 (glutamate 289) is a Glutamate methyl ester (Glu). Positions 293 to 529 (STKENSMAVQ…NIVRVVNELS (237 aa)) constitute a Methyl-accepting transducer domain. Position 548 is a glutamate methyl ester (Glu) (glutamate 548).

The protein belongs to the methyl-accepting chemotaxis (MCP) protein family.

The protein resides in the cell membrane. Its function is as follows. Chemotactic-signal transducers respond to changes in the concentration of attractants and repellents in the environment, transduce a signal from the outside to the inside of the cell, and facilitate sensory adaptation through the variation of the level of methylation. The sequence is that of Probable methyl-accepting chemotaxis protein BT9727_0355 from Bacillus thuringiensis subsp. konkukian (strain 97-27).